The chain runs to 218 residues: Peptide methionine sulfoxide reductase A2 (218 aa).

Over residues methionine 1–proline 19 the composition is skewed to polar residues. The interval methionine 1 to lysine 30 is disordered. Position 205 is a phosphoserine (serine 205).

The protein belongs to the MsrA Met sulfoxide reductase family.

The protein localises to the cytoplasm. It is found in the cytosol. The enzyme catalyses L-methionyl-[protein] + [thioredoxin]-disulfide + H2O = L-methionyl-(S)-S-oxide-[protein] + [thioredoxin]-dithiol. It carries out the reaction [thioredoxin]-disulfide + L-methionine + H2O = L-methionine (S)-S-oxide + [thioredoxin]-dithiol. With respect to regulation, activated during dark in short day conditions. Catalyzes the reduction of methionine sulfoxide (MetSO) to methionine in proteins. Plays a protective role against oxidative stress by restoring activity to proteins that have been inactivated by methionine oxidation. Prevents cellular oxidative damage in long nights. MSRA family specifically reduces the MetSO S-enantiomer. In Arabidopsis thaliana (Mouse-ear cress), this protein is Peptide methionine sulfoxide reductase A2 (MRSA2).